A 1342-amino-acid polypeptide reads, in one-letter code: DNA-directed RNA polymerase subunit beta (1342 aa).

This sequence belongs to the RNA polymerase beta chain family. The RNAP catalytic core consists of 2 alpha, 1 beta, 1 beta' and 1 omega subunit. When a sigma factor is associated with the core the holoenzyme is formed, which can initiate transcription.

The catalysed reaction is RNA(n) + a ribonucleoside 5'-triphosphate = RNA(n+1) + diphosphate. DNA-dependent RNA polymerase catalyzes the transcription of DNA into RNA using the four ribonucleoside triphosphates as substrates. This is DNA-directed RNA polymerase subunit beta from Yersinia pestis bv. Antiqua (strain Angola).